Here is a 362-residue protein sequence, read N- to C-terminus: MHSFASLLAYGLAAGATLASASPIEARDSCTFTTAAAAKAGKAKCSTITLDSIKVPAGTTLDLTGLTSGTKVIFEGTTTFDYEEWAGPLISMSGKDITVTGASGHLINCDGSRWWDGKGTSGKKKPKFFYAHGLDSSSITGLNIKNTPLMAFSVESDDITLTDITINNADGDSLGGHNTDAFDVGNSVGVNIIKPWVHNQDDCLAINSGENIWFTGGTCIGGHGLSIGSVGDRSNNVVKNVTIEHSTVSNSENAVRIKTISGATGSVSEITYSNIVMSGISDYGVVIQQDYEDGKPTGKPTNGVTITDVKLESVTGTVDSKATDIYLLCGSGSCSDWTWDDVKVTGGKKSSACKNYPSVASC.

Positions 1 to 20 are cleaved as a signal peptide; the sequence is MHSFASLLAYGLAAGATLAS. The propeptide occupies 21–27; that stretch reads ASPIEAR. The cysteines at positions 30 and 45 are disulfide-linked. Residues 156–186 form a PbH1 1 repeat; it reads SDDITLTDITINNADGDSLGGHNTDAFDVGN. Asp-201 (proton donor) is an active-site residue. Cys-203 and Cys-219 are oxidised to a cystine. 4 PbH1 repeats span residues 209 to 229, 238 to 259, 267 to 289, and 301 to 322; these read GENI…SIGS, VKNV…RIKT, VSEI…VIQQ, and TNGV…DSKA. His-223 is an active-site residue. N-linked (GlcNAc...) asparagine glycosylation is present at Asn-240. 2 disulfides stabilise this stretch: Cys-329/Cys-334 and Cys-353/Cys-362.

This sequence belongs to the glycosyl hydrolase 28 family.

The protein resides in the secreted. It catalyses the reaction (1,4-alpha-D-galacturonosyl)n+m + H2O = (1,4-alpha-D-galacturonosyl)n + (1,4-alpha-D-galacturonosyl)m.. Involved in maceration and soft-rotting of plant tissue. Hydrolyzes the 1,4-alpha glycosidic bonds of de-esterified pectate in the smooth region of the plant cell wall. This Aspergillus kawachii (strain NBRC 4308) (White koji mold) protein is Probable endopolygalacturonase II (pgaII).